The primary structure comprises 480 residues: uncharacterized protein (480 aa).

This is an uncharacterized protein from Xylella fastidiosa (strain 9a5c).